Here is a 764-residue protein sequence, read N- to C-terminus: MNGEADCPTDLEMAAPKGQDRWSQEDMLTLLECMKNNLPSNDSSKFKTTESHMDWEKVAFKDFSGDMCKLKWVEISNEVRKFRTLTELILDAQEHVKNPYKGKKLKKHPDFPKKPLTPYFRFFMEKRAKYAKLHPEMSNLDLTKILSKKYKELPEKKKMKYIQDFQREKQEFERNLARFREDHPDLIQNAKKSDIPEKPKTPQQLWYTHEKKVYLKVRPDATTKEVKDSLGKQWSQLSDKKRLKWIHKALEQRKEYEEIMRDYIQKHPELNISEEGITKSTLTKAERQLKDKFDGRPTKPPPNSYSLYCAELMANMKDVPSTERMVLCSQQWKLLSQKEKDAYHKKCDQKKKDYEVELLRFLESLPEEEQQRVLGEEKMLNINKKQATSPASKKPAQEGGKGGSEKPKRPVSAMFIFSEEKRRQLQEERPELSESELTRLLARMWNDLSEKKKAKYKAREAALKAQSERKPGGEREERGKLPESPKRAEEIWQQSVIGDYLARFKNDRVKALKAMEMTWNNMEKKEKLMWIKKAAEDQKRYERELSEMRAPPAATNSSKKMKFQGEPKKPPMNGYQKFSQELLSNGELNHLPLKERMVEIGSRWQRISQSQKEHYKKLAEEQQKQYKVHLDLWVKSLSPQDRAAYKEYISNKRKSMTKLRGPNPKSSRTTLQSKSESEEDDEEDEDDEDEDEEEEDDENGDSSEDGGDSSESSSEDESEDGDENEEDDEDEDDDEDDDEDEDNESEGSSSSSSSSGDSSDSDSN.

The residue at position 1 (M1) is an N-acetylmethionine. A disordered region spans residues 1–21 (MNGEADCPTDLEMAAPKGQDR). 2 DNA-binding regions (HMG box) span residues 112-180 (PKKP…ARFR) and 196-264 (PEKP…RDYI). T201 bears the Phosphothreonine mark. Phosphoserine occurs at positions 273, 336, 364, 389, 412, 433, 435, 484, 495, 546, 584, and 638. Positions 298–362 (TKPPPNSYSL…DYEVELLRFL (65 aa)) form a DNA-binding region, HMG box 3. Residues 381–411 (NINKKQATSPASKKPAQEGGKGGSEKPKRPV) form a disordered region. 3 DNA-binding regions (HMG box) span residues 407-475 (PKRP…GGER), 482-549 (PESP…SEMR), and 568-634 (KKPP…DLWV). Residues 459 to 487 (REAALKAQSERKPGGEREERGKLPESPKR) are disordered. The interval 546–576 (SEMRAPPAATNSSKKMKFQGEPKKPPMNGYQ) is disordered. The tract at residues 648–764 (YISNKRKSMT…SGDSSDSDSN (117 aa)) is disordered. Polar residues predominate over residues 664 to 674 (PKSSRTTLQSK). Over residues 677–745 (SEEDDEEDED…DDDEDEDNES (69 aa)) the composition is skewed to acidic residues. Positions 746–758 (EGSSSSSSSSGDS) are enriched in low complexity.

As to quaternary structure, homodimer. Part of Pol I pre-initiation complex (PIC), in which Pol I core assembles with RRN3 and promoter-bound UTBF and SL1/TIF-IB complex. Interacts with TOP2A in the context of Pol I complex. Interacts with TBP. Interacts with TAF1A. Interacts with RASL11A. Binds to IRS1 and PIK3CA. Interacts with DHX33. Interacts with PHF6. Interacts with CEBPA (isoform 1 and isoform 4). Interacts with DDX11. Interacts with NOP53. Interacts with ALKBH2. In terms of processing, phosphorylated and activated by PIK3CA.

Its subcellular location is the nucleus. It localises to the nucleolus. Functionally, recognizes the ribosomal RNA gene promoter and activates transcription mediated by RNA polymerase I (Pol I) through cooperative interactions with the transcription factor SL1/TIF-IB complex. It binds specifically to the upstream control element and can activate Pol I promoter escape. The polypeptide is Nucleolar transcription factor 1 (UBTF) (Homo sapiens (Human)).